A 267-amino-acid polypeptide reads, in one-letter code: MDHNTIVAAALGLLEGLTEFIPVSSTGHVLLAGHFLGFDSPGRAFEVLIQLGAIMAILGVYAGRLWRIFSSAPQDPRARRFILAVLLAFLPAVVIGVLAHRIIKEVLFETPTLIAVMLIVGGVVLLFVDRMANRPRHFSAEDFPLPMALKIGFIQCLAMIPGVSRSGATIVGALLLGADKRSAAEFSFFLSMPTMLGAFVYDLYKNRDILDAAATGNIVIGFVCAFLAAVVVVRGLLNYVSTYGYGLFAWWRIAVGVAVLLALQAGW.

A run of 8 helical transmembrane segments spans residues 5-25 (TIVAAALGLLEGLTEFIPVSS), 45-65 (FEVLIQLGAIMAILGVYAGRL), 82-102 (ILAVLLAFLPAVVIGVLAHRI), 108-128 (FETPTLIAVMLIVGGVVLLFV), 143-163 (FPLPMALKIGFIQCLAMIPGV), 183-203 (AAEFSFFLSMPTMLGAFVYDL), 213-233 (AATGNIVIGFVCAFLAAVVVV), and 243-263 (YGYGLFAWWRIAVGVAVLLAL).

The protein belongs to the UppP family.

The protein resides in the cell inner membrane. It catalyses the reaction di-trans,octa-cis-undecaprenyl diphosphate + H2O = di-trans,octa-cis-undecaprenyl phosphate + phosphate + H(+). In terms of biological role, catalyzes the dephosphorylation of undecaprenyl diphosphate (UPP). Confers resistance to bacitracin. This Paracoccus denitrificans (strain Pd 1222) protein is Undecaprenyl-diphosphatase.